A 536-amino-acid chain; its full sequence is Protein Rep68 (536 aa).

Positions 1–199 (MPGFYEIVIK…AQHLTHVSQT (199 aa)) constitute a PV NS1-Nuc domain. A divalent metal cation is bound by residues Glu83, His90, and His92. Residues 90 to 92 (HMH) carry the RCR-2 motif. Tyr156 serves as the catalytic For nuclease activity. The short motif at 156 to 160 (YLLPK) is the RCR-3 element. Residues 196–211 (VSQTQEQNKENQNPNS) show a composition bias toward polar residues. Residues 196–216 (VSQTQEQNKENQNPNSDAPVI) are disordered. The SF3 helicase domain occupies 308 to 463 (DPQYAASVFL…LDHDFGKVTK (156 aa)). Position 334–341 (334–341 (GPATTGKT)) interacts with ATP. A disordered region spans residues 488–536 (KGGAKKRPAPSDADISEPKRVRESVAQPSTSDAEASINYADRLARGHSL).

In terms of assembly, interacts with host TOPORS. Interacts with host KCTD5. The cofactor is a divalent metal cation.

The protein resides in the host nucleus. It catalyses the reaction ATP + H2O = ADP + phosphate + H(+). Its function is as follows. Plays an essential role in the initiation of viral DNA synthesis. Binds specifically to an inverted terminal repeat element (ITR) on the 3' and 5' ends of the viral DNA, where it cleaves a site specifically to generate a priming site for initiation of the synthesis of a complementary strand. Also plays a role as transcriptional regulator, DNA helicase and as key factor in site-specific integration of the viral genome. Inhibits the host cell cycle G1/S and G2/M transitions. These arrests may provide essential cellular factors for viral DNA replication. In Mammalia (AAV-2), this protein is Protein Rep68 (Rep68).